The chain runs to 383 residues: tRNA-specific 2-thiouridylase MnmA (383 aa).

ATP-binding positions include Ala16–Ser23 and Leu42. The Nucleophile role is filled by Cys110. A disulfide bond links Cys110 and Cys209. Residue Gly134 participates in ATP binding. An interaction with tRNA region spans residues Lys159 to Gln161. Cys209 serves as the catalytic Cysteine persulfide intermediate.

It belongs to the MnmA/TRMU family.

The protein localises to the cytoplasm. It catalyses the reaction S-sulfanyl-L-cysteinyl-[protein] + uridine(34) in tRNA + AH2 + ATP = 2-thiouridine(34) in tRNA + L-cysteinyl-[protein] + A + AMP + diphosphate + H(+). In terms of biological role, catalyzes the 2-thiolation of uridine at the wobble position (U34) of tRNA, leading to the formation of s(2)U34. In Caulobacter vibrioides (strain ATCC 19089 / CIP 103742 / CB 15) (Caulobacter crescentus), this protein is tRNA-specific 2-thiouridylase MnmA.